The following is a 295-amino-acid chain: Elongation factor Ts (295 aa).

The interval 79 to 82 is involved in Mg(2+) ion dislocation from EF-Tu; the sequence is TDFV.

Belongs to the EF-Ts family.

Its subcellular location is the cytoplasm. Functionally, associates with the EF-Tu.GDP complex and induces the exchange of GDP to GTP. It remains bound to the aminoacyl-tRNA.EF-Tu.GTP complex up to the GTP hydrolysis stage on the ribosome. The chain is Elongation factor Ts from Bacillus cereus (strain G9842).